A 721-amino-acid polypeptide reads, in one-letter code: Long-chain-fatty-acid--CoA ligase ACSBG1 (721 aa).

The tract at residues 1-64 is disordered; it reads MPRSSEAGYC…SHGLELSAPE (64 aa). Over residues 26–43 the composition is skewed to polar residues; that stretch reads QQGASMGTSPDNSQTSSL. A phosphoserine mark is found at serine 34, serine 50, serine 53, and serine 70. ATP contacts are provided by residues 279–287, 469–474, aspartate 547, and arginine 562; these read TSGTTGNPK and AGYGLS. Phosphotyrosine is present on tyrosine 655. Lysine 698 serves as a coordination point for ATP.

This sequence belongs to the ATP-dependent AMP-binding enzyme family. Bubblegum subfamily. As to expression, present in testis, at a lower level in brain, and at a very low level in ovary. Not detected in other tissues. tested. Present in Leydig cells of the adult testis and to a lesser degree in the seminiferous tubules in spermatogonia and Sertoli cells (at protein level).

It localises to the cytoplasm. It is found in the cytoplasmic vesicle. The protein localises to the microsome. Its subcellular location is the endoplasmic reticulum. The protein resides in the cell membrane. The enzyme catalyses a long-chain fatty acid + ATP + CoA = a long-chain fatty acyl-CoA + AMP + diphosphate. The catalysed reaction is (E)-hexadec-2-enoate + ATP + CoA = (2E)-hexadecenoyl-CoA + AMP + diphosphate. It catalyses the reaction hexadecanoate + ATP + CoA = hexadecanoyl-CoA + AMP + diphosphate. Functionally, catalyzes the conversion of fatty acids such as long-chain and very long-chain fatty acids to their active form acyl-CoAs for both synthesis of cellular lipids, and degradation via beta-oxidation. Can activate diverse saturated, monosaturated and polyunsaturated fatty acids. In Rattus norvegicus (Rat), this protein is Long-chain-fatty-acid--CoA ligase ACSBG1.